Reading from the N-terminus, the 306-residue chain is MRNLRLGTRGSQLALWQARHVASLLESSIPDLKVEIKTIKTTGDKILDVALSKIGDKGLFTKEIEKELLDGEIDIAVHSMKDLPSELPPGLCIAAVLEREDPRDVLLSHKNYSLADLPQAALIGTSSLRRIAQLKAWRPDLQLVDMRGNVETRIRKMKEQDLDGIILACAGVKRLGLEEMISDYLPAHLVLPAVGQGMIAVEARSDEQDVLKLLSRINHQDSFLAGQAERGFLHELGGGCQVPVASLAELQGGQLHIRGLIASLDGKEKYSGSSDCSPPEAEEAGRELARSLLQQGGAAILCETRK.

At Cys240 the chain carries S-(dipyrrolylmethanemethyl)cysteine.

It belongs to the HMBS family. Monomer. Requires dipyrromethane as cofactor.

The enzyme catalyses 4 porphobilinogen + H2O = hydroxymethylbilane + 4 NH4(+). Its pathway is porphyrin-containing compound metabolism; protoporphyrin-IX biosynthesis; coproporphyrinogen-III from 5-aminolevulinate: step 2/4. Tetrapolymerization of the monopyrrole PBG into the hydroxymethylbilane pre-uroporphyrinogen in several discrete steps. This chain is Porphobilinogen deaminase, found in Syntrophomonas wolfei subsp. wolfei (strain DSM 2245B / Goettingen).